The chain runs to 393 residues: Phospho-N-acetylmuramoyl-pentapeptide-transferase (393 aa).

Transmembrane regions (helical) follow at residues 29-49 (RAVM…PWVI), 75-95 (TPTM…LLWF), 101-121 (FVWV…VDDW), 138-158 (YLWQ…SVSE), 194-214 (VSYP…IVGA), 226-246 (GLAI…AYVT), 263-283 (AGEL…FLWF), 290-310 (VFMG…IAVI), 315-335 (IVLG…MAQV), and 370-390 (QVVV…LSTL).

It belongs to the glycosyltransferase 4 family. MraY subfamily. It depends on Mg(2+) as a cofactor.

It is found in the cell inner membrane. It carries out the reaction UDP-N-acetyl-alpha-D-muramoyl-L-alanyl-gamma-D-glutamyl-meso-2,6-diaminopimeloyl-D-alanyl-D-alanine + di-trans,octa-cis-undecaprenyl phosphate = di-trans,octa-cis-undecaprenyl diphospho-N-acetyl-alpha-D-muramoyl-L-alanyl-D-glutamyl-meso-2,6-diaminopimeloyl-D-alanyl-D-alanine + UMP. It participates in cell wall biogenesis; peptidoglycan biosynthesis. Its function is as follows. Catalyzes the initial step of the lipid cycle reactions in the biosynthesis of the cell wall peptidoglycan: transfers peptidoglycan precursor phospho-MurNAc-pentapeptide from UDP-MurNAc-pentapeptide onto the lipid carrier undecaprenyl phosphate, yielding undecaprenyl-pyrophosphoryl-MurNAc-pentapeptide, known as lipid I. The chain is Phospho-N-acetylmuramoyl-pentapeptide-transferase from Leptothrix cholodnii (strain ATCC 51168 / LMG 8142 / SP-6) (Leptothrix discophora (strain SP-6)).